A 318-amino-acid polypeptide reads, in one-letter code: Isoeugenol synthase 1 (318 aa).

Residues 10-13 (TGYI), 32-43 (ARPLTPDSTPSS), Arg-33, 84-86 (VPM), 109-111 (SEF), Lys-131, and 151-153 (NCF) each bind NADP(+). Lys-131 serves as the catalytic Proton donor/acceptor. Residue Pro-260 coordinates substrate.

The protein belongs to the NmrA-type oxidoreductase family. In terms of tissue distribution, mostly expressed in petals, and, to a lower extent, in sepals, stamens and pistils.

The catalysed reaction is (E)-isoeugenol + acetate + NADP(+) = (E)-coniferyl acetate + NADPH. It functions in the pathway aromatic compound metabolism; phenylpropanoid biosynthesis. Catalyzes the synthesis of the phenylpropene isoeugenol from coniferyl acetate. Phenylpropenes are the primary constituents of various essential plant oils. They are produced as antimicrobial and antianimal compounds, or as floral attractants of pollinators. Isoeugenol is a characteristic aromatic constituent of spices and a floral volatile compound. The sequence is that of Isoeugenol synthase 1 from Clarkia breweri (Fairy fans).